We begin with the raw amino-acid sequence, 176 residues long: Translation initiation factor IF-3 (176 aa).

Belongs to the IF-3 family. As to quaternary structure, monomer.

It is found in the cytoplasm. In terms of biological role, IF-3 binds to the 30S ribosomal subunit and shifts the equilibrium between 70S ribosomes and their 50S and 30S subunits in favor of the free subunits, thus enhancing the availability of 30S subunits on which protein synthesis initiation begins. The polypeptide is Translation initiation factor IF-3 (Streptococcus pyogenes serotype M18 (strain MGAS8232)).